The sequence spans 558 residues: MNTKTYGVTEPISTNGPTPKENILNDALIQELKNRGSFESEQATKKRVEVLTLFQRLVQEFVYTVSKSKNMSDSMAQDAGGKVFTFGSYRLGVYGPGSDIDTLVVVPKHVTRDDFFSVFADIIRKRPELEEIACVPDAYVPIIKLEFDGISIDLIMARLNIPRVPLDLTLDDKNLLKNLDEKDLRSLNGTRVTDEILQLVPKPTVFKHALRCIKLWAQQRAVYGNIFGFPGGVAWAMLVARICQLYPNAVSSAIVEKFFNIYTKWNWPEPVLLKSIEDGPLQVRVWNPRLYPHDRLHRMPVITPAYPSMCATHNITSSTQKVILAELSRGSSIMQEIHAGKKTWSDLFEKHSFFYKYKFYLCVVAASIDSAEEHKKWSGFIESKLRQLVLKLEVAEGVEIAHPYVKDFSNTFILDDKNAEDIINSYGTLSGEDFLRTLHSSDSDKDDEEFKKIRLTKYYIGLDLNLTKSSDGVRKLDIQYPCAEFYSICKGSTSFTEGVNFIQIKNVKLHELSNDVYEDGEERPKKSGKKRKKVIKEDGQKRVRNESPASSASVNGSS.

The segment covering 1 to 17 has biased composition (polar residues); it reads MNTKTYGVTEPISTNGP. The interval 1 to 20 is disordered; that stretch reads MNTKTYGVTEPISTNGPTPK. Residues 86 to 88, 99 to 101, Asp-153, Lys-214, Tyr-223, and 232 to 233 each bind ATP; these read FGS, DID, and GV. Mg(2+) is bound by residues Asp-99, Asp-101, and Asp-153. Positions 516–558 are disordered; sequence VYEDGEERPKKSGKKRKKVIKEDGQKRVRNESPASSASVNGSS. Over residues 535 to 545 the composition is skewed to basic and acidic residues; sequence IKEDGQKRVRN. Residues 547-558 show a composition bias toward low complexity; that stretch reads SPASSASVNGSS.

This sequence belongs to the poly(A) polymerase family. Requires Mg(2+) as cofactor. It depends on Mn(2+) as a cofactor.

It is found in the nucleus. The enzyme catalyses RNA(n) + ATP = RNA(n)-3'-adenine ribonucleotide + diphosphate. In terms of biological role, polymerase that creates the 3'-poly(A) tail of mRNA's. May acquire specificity through interaction with a cleavage and polyadenylation factor. The sequence is that of Poly(A) polymerase PAPalpha (PAPALPHA) from Candida albicans (strain SC5314 / ATCC MYA-2876) (Yeast).